We begin with the raw amino-acid sequence, 327 residues long: Spermidine/putrescine import ATP-binding protein PotA (327 aa).

One can recognise an ABC transporter domain in the interval 5–235 (IKVEAVEKHF…PKTLFVATFI (231 aa)). Position 37-44 (37-44 (GPSGCGKT)) interacts with ATP.

It belongs to the ABC transporter superfamily. Spermidine/putrescine importer (TC 3.A.1.11.1) family. As to quaternary structure, the complex is composed of two ATP-binding proteins (PotA), two transmembrane proteins (PotB and PotC) and a solute-binding protein (PotD).

The protein localises to the cell membrane. It carries out the reaction ATP + H2O + polyamine-[polyamine-binding protein]Side 1 = ADP + phosphate + polyamineSide 2 + [polyamine-binding protein]Side 1.. Its function is as follows. Part of the ABC transporter complex PotABCD involved in spermidine/putrescine import. Responsible for energy coupling to the transport system. The protein is Spermidine/putrescine import ATP-binding protein PotA of Bacillus anthracis.